A 193-amino-acid polypeptide reads, in one-letter code: Ion-translocating oxidoreductase complex subunit A (193 aa).

A run of 6 helical transmembrane segments spans residues 5–25, 39–59, 63–83, 102–122, 134–154, and 171–191; these read LLLL…FLGL, VGMG…SYLM, ILIP…VIAV, LLGI…VALL, IIYG…FAAM, and SIAM…TGLI.

This sequence belongs to the NqrDE/RnfAE family. The complex is composed of six subunits: RnfA, RnfB, RnfC, RnfD, RnfE and RnfG.

It localises to the cell inner membrane. Part of a membrane-bound complex that couples electron transfer with translocation of ions across the membrane. The sequence is that of Ion-translocating oxidoreductase complex subunit A from Aeromonas salmonicida (strain A449).